Reading from the N-terminus, the 445-residue chain is 26S proteasome regulatory subunit RPN5 (445 aa).

Position 2 is an N-acetylserine (Ser2). A PCI domain is found at 233 to 407 (EYLEVAQYLQ…KIVNFEKPKN (175 aa)).

Belongs to the proteasome subunit p55 family. In terms of processing, N-acetylated by NAT1.

In terms of biological role, acts as a regulatory subunit of the 26S proteasome which is involved in the ATP-dependent degradation of ubiquitinated proteins. In Saccharomyces cerevisiae (strain ATCC 204508 / S288c) (Baker's yeast), this protein is 26S proteasome regulatory subunit RPN5 (RPN5).